A 132-amino-acid polypeptide reads, in one-letter code: Ribosome-binding factor A (132 aa).

It belongs to the RbfA family. Monomer. Binds 30S ribosomal subunits, but not 50S ribosomal subunits or 70S ribosomes.

It localises to the cytoplasm. One of several proteins that assist in the late maturation steps of the functional core of the 30S ribosomal subunit. Associates with free 30S ribosomal subunits (but not with 30S subunits that are part of 70S ribosomes or polysomes). Required for efficient processing of 16S rRNA. May interact with the 5'-terminal helix region of 16S rRNA. The protein is Ribosome-binding factor A of Pectobacterium carotovorum subsp. carotovorum (strain PC1).